A 1286-amino-acid chain; its full sequence is Ankyrin-repeat and fibronectin type III domain-containing 1 (1286 aa).

ANK repeat units lie at residues 274 to 303 (QGNE…PEEL) and 311 to 340 (EGLT…RESP). A Fibronectin type-III domain is found at 411 to 507 (VPANACLMVS…TTTPVCASPS (97 aa)). Residues 748-755 (GLYLGYLK) form a highly conserved peptide sequence region. Over residues 999–1011 (SSHIDCLPSTSPS) the composition is skewed to polar residues. Disordered regions lie at residues 999–1032 (SSHI…EEGC), 1086–1106 (KASM…DTDH), 1187–1207 (AEDP…RGLP), and 1242–1286 (AGQD…SSML). The span at 1260–1277 (SSLPSSTSSEMSPDPTSP) shows a compositional bias: low complexity.

In terms of tissue distribution, expressed in both the suprachiasmatic nucleus and dorsal medial hypothalamus.

In terms of biological role, may play a role in neuronal function. The sequence is that of Ankyrin-repeat and fibronectin type III domain-containing 1 from Mus musculus (Mouse).